Here is a 324-residue protein sequence, read N- to C-terminus: Mitochondrial thiamine pyrophosphate carrier 1 (324 aa).

Solcar repeat units lie at residues 12-110 (GNRI…ISSA), 119-205 (PQPV…LRSP), and 212-307 (PFGT…VLGL). The next 6 helical transmembrane spans lie at 15–35 (IQVV…VAPL), 79–99 (ITGL…YGGI), 125–145 (FISG…LDLL), 182–202 (TAAI…YEAL), 218–238 (AGAG…LDLV), and 282–299 (GLTV…VTMW).

Belongs to the mitochondrial carrier (TC 2.A.29) family.

The protein resides in the mitochondrion inner membrane. In terms of biological role, mitochondrial transporter that mediates uptake of thiamine pyrophosphate (ThPP) into mitochondria. This is Mitochondrial thiamine pyrophosphate carrier 1 (TPC1) from Ajellomyces capsulatus (strain NAm1 / WU24) (Darling's disease fungus).